Here is a 153-residue protein sequence, read N- to C-terminus: Calmodulin-like protein 4 (153 aa).

4 EF-hand domains span residues 8–43 (DQINEYKECFSLYDKQQRGKIKATDLLTVMRCLGAS), 44–79 (PTPGEAQRHLQTHRIDRNGELDFSTFLTIMHMQIKQ), 81–116 (DPKKEILLAMLMADKEKKGYIMASELRSKLMQLGEK), and 117–152 (LTHKEVEDLFREAGIEPNGKVKYDEFIQKLTIPVRD).

This sequence belongs to the calmodulin family. As to quaternary structure, interacts with MYO7B; the interaction mediates the association of CALML4 with the IMAC/intermicrovillar adhesion complex. Interacts with MYO7A.

The protein localises to the cell projection. The protein resides in the microvillus. As part of the intermicrovillar adhesion complex/IMAC plays a role in epithelial brush border differentiation, controlling microvilli organization and length. Acts as a light chain for MYO7B and is required for efficient targeting of the IMAC to the tips of border brush microvilli. The sequence is that of Calmodulin-like protein 4 (CALML4) from Bos taurus (Bovine).